Reading from the N-terminus, the 440-residue chain is Aspartokinase (440 aa).

The protein belongs to the aspartokinase family.

It carries out the reaction L-aspartate + ATP = 4-phospho-L-aspartate + ADP. It participates in amino-acid biosynthesis; L-lysine biosynthesis via DAP pathway; (S)-tetrahydrodipicolinate from L-aspartate: step 1/4. The protein operates within amino-acid biosynthesis; L-methionine biosynthesis via de novo pathway; L-homoserine from L-aspartate: step 1/3. It functions in the pathway amino-acid biosynthesis; L-threonine biosynthesis; L-threonine from L-aspartate: step 1/5. This chain is Aspartokinase (lysC), found in Chlamydia pneumoniae (Chlamydophila pneumoniae).